Reading from the N-terminus, the 525-residue chain is WD repeat-containing protein JIP5 (525 aa).

WD repeat units lie at residues Val-28–Asn-69, Arg-121–Lys-160, His-211–Ala-251, Gln-270–Gln-310, and Arg-358–Glu-398. Residues Asp-396–Leu-525 form a disordered region. The span at Ser-410–Ser-424 shows a compositional bias: acidic residues. Residues Asp-425–Asp-435 are compositionally biased toward low complexity. Residues Ser-463–His-484 show a composition bias toward basic and acidic residues. Basic residues predominate over residues Tyr-485–Lys-501. Residues Gln-513 to Leu-525 show a composition bias toward basic and acidic residues.

It belongs to the WD repeat WDR55 family.

Its subcellular location is the nucleus. The protein resides in the nucleolus. This Kluyveromyces lactis (strain ATCC 8585 / CBS 2359 / DSM 70799 / NBRC 1267 / NRRL Y-1140 / WM37) (Yeast) protein is WD repeat-containing protein JIP5 (JIP5).